The sequence spans 482 residues: Glutamate-rich WD repeat-containing protein 1 (482 aa).

Disordered regions lie at residues 1 to 75 (MSSK…WRAG) and 148 to 180 (QLHKTKHDDEDSDDDEDSDDDEESDDEDDEDKD). 2 stretches are compositionally biased toward acidic residues: residues 27-63 (NGEDDFENDDEVESFEDDEQSFEEIEEGGEEGGDNDG) and 157-180 (EDSDDDEDSDDDEESDDEDDEDKD). 5 WD repeats span residues 191–231 (NHNG…KALD), 294–334 (GHTE…PAIT), 337–377 (AHTA…DNSP), 383–423 (YHTG…DTEE), and 446–482 (QGQHDIKEVHWHPQIPHVAISTSIDGFNIFKSSNSEE).

The protein resides in the nucleus. It is found in the nucleolus. In Dictyostelium discoideum (Social amoeba), this protein is Glutamate-rich WD repeat-containing protein 1 (grwd1).